We begin with the raw amino-acid sequence, 140 residues long: Large ribosomal subunit protein uL14 (140 aa).

Belongs to the universal ribosomal protein uL14 family. Component of the large ribosomal subunit.

It is found in the cytoplasm. Functionally, component of the large ribosomal subunit. The ribosome is a large ribonucleoprotein complex responsible for the synthesis of proteins in the cell. In Ictalurus punctatus (Channel catfish), this protein is Large ribosomal subunit protein uL14 (rpl23).